We begin with the raw amino-acid sequence, 237 residues long: Cuticlin-like protein 19 (237 aa).

The signal sequence occupies residues 1–20 (MVEYNRIFCVLVIFSTTIKC).

As to quaternary structure, interacts with vps-51 and vps-52. In terms of tissue distribution, expression detected in motor neurons.

The protein localises to the golgi apparatus. The protein resides in the trans-Golgi network. This is Cuticlin-like protein 19 (cutl-19) from Caenorhabditis elegans.